A 289-amino-acid polypeptide reads, in one-letter code: Ribosomal RNA small subunit methyltransferase A (289 aa).

S-adenosyl-L-methionine contacts are provided by Asn-28, Leu-30, Gly-55, Glu-77, Asp-103, and Asn-122.

This sequence belongs to the class I-like SAM-binding methyltransferase superfamily. rRNA adenine N(6)-methyltransferase family. RsmA subfamily.

Its subcellular location is the cytoplasm. It carries out the reaction adenosine(1518)/adenosine(1519) in 16S rRNA + 4 S-adenosyl-L-methionine = N(6)-dimethyladenosine(1518)/N(6)-dimethyladenosine(1519) in 16S rRNA + 4 S-adenosyl-L-homocysteine + 4 H(+). Specifically dimethylates two adjacent adenosines (A1518 and A1519) in the loop of a conserved hairpin near the 3'-end of 16S rRNA in the 30S particle. May play a critical role in biogenesis of 30S subunits. The chain is Ribosomal RNA small subunit methyltransferase A from Jannaschia sp. (strain CCS1).